A 1597-amino-acid polypeptide reads, in one-letter code: Protein STU1 (1597 aa).

Disordered stretches follow at residues 220–265, 519–958, 1005–1154, and 1307–1332; these read GNSS…PSSS, DKVN…RPIH, DAEA…ELNT, and SQRPPDKRTSRAFLEAPSPSPDSSLV. The segment covering 535–552 has biased composition (basic and acidic residues); the sequence is APRESLKEVMRRSRESSV. The span at 577–605 shows a compositional bias: low complexity; it reads SSGLVGRSLSGSNLTDRSNRLSSTSTSSR. Composition is skewed to polar residues over residues 610–622 and 632–645; these read AVSDSTRPTQMTR and PSLTRSSRDQSLTR. 2 stretches are compositionally biased toward basic and acidic residues: residues 660–673 and 694–708; these read GSRELPKQRVDQNR and ESSRQSRESSLDPSR. A compositionally biased stretch (polar residues) spans 709 to 726; the sequence is ESSLAPSVHSSTAISRES. Residues 765 to 781 show a composition bias toward low complexity; sequence EETMNEVTTAEATATTA. Composition is skewed to polar residues over residues 791 to 801 and 808 to 822; these read PRESTPPNSSP and PATQGVSTSPATGKS. Positions 832–846 are enriched in basic and acidic residues; that stretch reads ELSRDLNGESKHLKE. 3 stretches are compositionally biased toward polar residues: residues 918–933, 1013–1025, and 1036–1045; these read DSQSHGADSADLQSEP, TEQTEAVKTSDTA, and NSEQGPSTEP. The span at 1081-1091 shows a compositional bias: basic and acidic residues; it reads ASDEIETDHTK. The span at 1108-1119 shows a compositional bias: acidic residues; the sequence is EPMEICDSDNDA. Polar residues predominate over residues 1122-1139; it reads NGTNPDTKCQDQQDSTTP. Residues 1537–1573 form an HEAT repeat; the sequence is PSYETQLLALITELISDPDPLVRRVTVGLVVRVLRVS.

It belongs to the CLASP family. Interacts with microtubules.

Its subcellular location is the cytoplasm. The protein localises to the cytoskeleton. The protein resides in the nucleus. It is found in the spindle. Its function is as follows. Microtubule binding protein that promotes the stabilization of dynamic microtubules. Required for mitotic spindle formation. This chain is Protein STU1 (STU1), found in Yarrowia lipolytica (strain CLIB 122 / E 150) (Yeast).